The chain runs to 25 residues: Caerin-1.6 (25 aa).

Residue leucine 25 is modified to Leucine amide.

The protein belongs to the frog skin active peptide (FSAP) family. Caerin subfamily. Expressed by the skin dorsal glands.

The protein localises to the secreted. Its function is as follows. Antimicrobial peptide. Adopts an alpha helical conformation which can disrupt bacterial membranes. Strongly inhibits the formation of NO by neuronal nitric oxide synthase (nNOS) at micromolar concentrations. Acts by a non-competitive mechanism, probably by binding to calcium/calmodulin and as a consequence blocking calmodulin attachment to nNOS. In terms of biological role, does not show antimicrobial activity. The sequence is that of Caerin-1.6 from Ranoidea chloris (Red-eyed tree frog).